The chain runs to 502 residues: ATP synthase subunit alpha (502 aa).

Residues 115 to 138 form a disordered region; sequence VDGLGPIETTETRPIESPAPGVMD. 169-176 contacts ATP; sequence GDRQTGKT.

The protein belongs to the ATPase alpha/beta chains family. As to quaternary structure, F-type ATPases have 2 components, CF(1) - the catalytic core - and CF(0) - the membrane proton channel. CF(1) has five subunits: alpha(3), beta(3), gamma(1), delta(1), epsilon(1). CF(0) has three main subunits: a(1), b(2) and c(9-12). The alpha and beta chains form an alternating ring which encloses part of the gamma chain. CF(1) is attached to CF(0) by a central stalk formed by the gamma and epsilon chains, while a peripheral stalk is formed by the delta and b chains.

Its subcellular location is the cell membrane. It catalyses the reaction ATP + H2O + 4 H(+)(in) = ADP + phosphate + 5 H(+)(out). Functionally, produces ATP from ADP in the presence of a proton gradient across the membrane. The alpha chain is a regulatory subunit. This is ATP synthase subunit alpha from Geobacillus sp. (strain WCH70).